A 253-amino-acid chain; its full sequence is 5'-nucleotidase SurE (253 aa).

Residues D8, D9, S40, and N92 each contribute to the a divalent metal cation site.

Belongs to the SurE nucleotidase family. Requires a divalent metal cation as cofactor.

It localises to the cytoplasm. The enzyme catalyses a ribonucleoside 5'-phosphate + H2O = a ribonucleoside + phosphate. In terms of biological role, nucleotidase that shows phosphatase activity on nucleoside 5'-monophosphates. This chain is 5'-nucleotidase SurE, found in Hyphomonas neptunium (strain ATCC 15444).